The sequence spans 775 residues: Acylamino-acid-releasing enzyme 1 (775 aa).

Active-site charge relay system residues include S627, D718, and H750.

Belongs to the peptidase S9C family. Homotetramer.

The protein resides in the cytoplasm. It catalyses the reaction Cleavage of an N-acetyl or N-formyl amino acid from the N-terminus of a polypeptide.. Catalyzes the hydrolysis of the N-terminal peptide bond of an N-acetylated peptide to generate an N-acetylated amino acid and a peptide with a free N-terminus. This Oryza sativa subsp. japonica (Rice) protein is Acylamino-acid-releasing enzyme 1.